We begin with the raw amino-acid sequence, 208 residues long: Imidazoleglycerol-phosphate dehydratase (208 aa).

This sequence belongs to the imidazoleglycerol-phosphate dehydratase family.

It localises to the cytoplasm. The catalysed reaction is D-erythro-1-(imidazol-4-yl)glycerol 3-phosphate = 3-(imidazol-4-yl)-2-oxopropyl phosphate + H2O. Its pathway is amino-acid biosynthesis; L-histidine biosynthesis; L-histidine from 5-phospho-alpha-D-ribose 1-diphosphate: step 6/9. The sequence is that of Imidazoleglycerol-phosphate dehydratase from Symbiobacterium thermophilum (strain DSM 24528 / JCM 14929 / IAM 14863 / T).